A 72-amino-acid chain; its full sequence is MESNGASVQYNRWSEDNITLQEPQSRSRLLGIYNRVFTGRLVIMFKIAASLTVMVVMYIAGYITGFYVHQCG.

Over 1 to 40 the chain is Extracellular; the sequence is MESNGASVQYNRWSEDNITLQEPQSRSRLLGIYNRVFTGR. Residues 41 to 61 traverse the membrane as a helical; Signal-anchor for type II membrane protein segment; sequence LVIMFKIAASLTVMVVMYIAG. Topologically, residues 62 to 72 are cytoplasmic; the sequence is YITGFYVHQCG.

It belongs to the SMIM1 family. Homooligomer; disulfide-linked.

Its subcellular location is the cell membrane. In terms of biological role, regulator of red blood cells formation. The protein is Small integral membrane protein 1 (smim1) of Danio rerio (Zebrafish).